The sequence spans 149 residues: Arginine repressor (149 aa).

It belongs to the ArgR family.

It is found in the cytoplasm. It participates in amino-acid biosynthesis; L-arginine biosynthesis [regulation]. Regulates arginine biosynthesis genes. The protein is Arginine repressor of Alkaliphilus metalliredigens (strain QYMF).